Consider the following 448-residue polypeptide: Methionine aminopeptidase 2-1 (448 aa).

A disordered region spans residues methionine 1–arginine 83. Residues glutamate 32–alanine 48 show a composition bias toward acidic residues. The segment covering alanine 59–aspartate 73 has biased composition (basic residues). Substrate is bound at residue histidine 198. A divalent metal cation is bound by residues aspartate 218, aspartate 229, and histidine 298. Histidine 306 serves as a coordination point for substrate. A divalent metal cation contacts are provided by glutamate 334 and glutamate 429.

The protein belongs to the peptidase M24A family. Methionine aminopeptidase eukaryotic type 2 subfamily. Requires Co(2+) as cofactor. It depends on Zn(2+) as a cofactor. Mn(2+) serves as cofactor. Fe(2+) is required as a cofactor.

It localises to the cytoplasm. The enzyme catalyses Release of N-terminal amino acids, preferentially methionine, from peptides and arylamides.. Cotranslationally removes the N-terminal methionine from nascent proteins. The N-terminal methionine is often cleaved when the second residue in the primary sequence is small and uncharged (Met-Ala-, Cys, Gly, Pro, Ser, Thr, or Val). The polypeptide is Methionine aminopeptidase 2-1 (Ajellomyces capsulatus (strain G186AR / H82 / ATCC MYA-2454 / RMSCC 2432) (Darling's disease fungus)).